We begin with the raw amino-acid sequence, 404 residues long: uncharacterized protein (404 aa).

Polar residues predominate over residues 262–278; the sequence is VSTGDTSPCGTEDSSPA. 2 disordered regions span residues 262 to 307 and 319 to 340; these read VSTG…SPSL and MKKS…SGAD. Serine 268, serine 276, and serine 279 each carry phosphoserine. Phosphothreonine occurs at positions 290 and 293. 5 positions are modified to phosphoserine: serine 304, serine 306, serine 324, serine 358, and serine 362. The segment covering 319 to 336 has biased composition (basic and acidic residues); sequence MKKSHSANDSEEFFREDD.

This is an uncharacterized protein from Mus musculus (Mouse).